The primary structure comprises 361 residues: MNSETGALRRGWTTGTCASAAARAAFEALLGIEPEDPVPVTLPSGARPTFALARLDRGSGFVRAGIVKDAGDDPDVTHGALVLATLRFGAPATGIVFRAGPGVGIVTKPGLPLPPGEPAINAMPRRMIRTALTEVAEANGVTCDLVVEVGIEDGERIAERTMNRRLGIIGGLSILGTTGVVVPYSCAAWIASIHRGIDVARAEGLTHLAGATGATSEAAIRNLYGLPEQALIDMGDFVGGMLKYIRGHPVARVTIAGGFAKMTKLAQGRLDLHSKREAIDFRWLAELYCSIGGKAESGMSVRTANTALEVLQMAQAEHVPIAPAIARSACRVAAGALARADIALDVAIFDRDGCLIASERC.

The protein belongs to the CbiD family.

It carries out the reaction Co-precorrin-5B + S-adenosyl-L-methionine = Co-precorrin-6A + S-adenosyl-L-homocysteine. It functions in the pathway cofactor biosynthesis; adenosylcobalamin biosynthesis; cob(II)yrinate a,c-diamide from sirohydrochlorin (anaerobic route): step 6/10. In terms of biological role, catalyzes the methylation of C-1 in cobalt-precorrin-5B to form cobalt-precorrin-6A. The polypeptide is Cobalt-precorrin-5B C(1)-methyltransferase (Methylorubrum extorquens (strain CM4 / NCIMB 13688) (Methylobacterium extorquens)).